Here is a 165-residue protein sequence, read N- to C-terminus: Transcription antitermination protein NusB (165 aa).

The protein belongs to the NusB family.

Its function is as follows. Involved in transcription antitermination. Required for transcription of ribosomal RNA (rRNA) genes. Binds specifically to the boxA antiterminator sequence of the ribosomal RNA (rrn) operons. In Nitratidesulfovibrio vulgaris (strain DSM 19637 / Miyazaki F) (Desulfovibrio vulgaris), this protein is Transcription antitermination protein NusB.